The primary structure comprises 383 residues: Cytochrome b (383 aa).

Helical transmembrane passes span 31–51 (FGSL…FLAM), 75–97 (WLMR…VHIF), 112–132 (LWCS…MGYV), and 178–198 (FFSL…IHLI). Heme b contacts are provided by His81 and His95. Heme b contacts are provided by His182 and His196. His201 lines the a ubiquinone pocket. A run of 4 helical transmembrane segments spans residues 224-244 (FYTK…IFIF), 288-308 (IGGV…PFTN), 320-340 (IFKV…WVGQ), and 347-367 (YTEI…IIIP).

This sequence belongs to the cytochrome b family. In terms of assembly, fungal cytochrome b-c1 complex contains 10 subunits; 3 respiratory subunits, 2 core proteins and 5 low-molecular weight proteins. Cytochrome b-c1 complex is a homodimer. The cofactor is heme b.

It localises to the mitochondrion inner membrane. Its function is as follows. Component of the ubiquinol-cytochrome c reductase complex (complex III or cytochrome b-c1 complex) that is part of the mitochondrial respiratory chain. The b-c1 complex mediates electron transfer from ubiquinol to cytochrome c. Contributes to the generation of a proton gradient across the mitochondrial membrane that is then used for ATP synthesis. The sequence is that of Cytochrome b (cob) from Phytophthora megasperma (Potato pink rot fungus).